We begin with the raw amino-acid sequence, 412 residues long: Serine hydroxymethyltransferase (412 aa).

Residues leucine 120 and 124 to 126 (GHL) contribute to the (6S)-5,6,7,8-tetrahydrofolate site. Lysine 228 is subject to N6-(pyridoxal phosphate)lysine. 353–355 (SPF) is a binding site for (6S)-5,6,7,8-tetrahydrofolate.

The protein belongs to the SHMT family. As to quaternary structure, homodimer. Pyridoxal 5'-phosphate serves as cofactor.

The protein localises to the cytoplasm. It catalyses the reaction (6R)-5,10-methylene-5,6,7,8-tetrahydrofolate + glycine + H2O = (6S)-5,6,7,8-tetrahydrofolate + L-serine. The protein operates within one-carbon metabolism; tetrahydrofolate interconversion. Its pathway is amino-acid biosynthesis; glycine biosynthesis; glycine from L-serine: step 1/1. Catalyzes the reversible interconversion of serine and glycine with tetrahydrofolate (THF) serving as the one-carbon carrier. This reaction serves as the major source of one-carbon groups required for the biosynthesis of purines, thymidylate, methionine, and other important biomolecules. Also exhibits THF-independent aldolase activity toward beta-hydroxyamino acids, producing glycine and aldehydes, via a retro-aldol mechanism. This Lachnoclostridium phytofermentans (strain ATCC 700394 / DSM 18823 / ISDg) (Clostridium phytofermentans) protein is Serine hydroxymethyltransferase.